The primary structure comprises 152 residues: Large ribosomal subunit protein bL9 (152 aa).

Residues 41–61 (QSAMSQLNAERKAEQRREAEE) are disordered. Residues 49 to 61 (AERKAEQRREAEE) are compositionally biased toward basic and acidic residues.

It belongs to the bacterial ribosomal protein bL9 family.

Binds to the 23S rRNA. The protein is Large ribosomal subunit protein bL9 of Levilactobacillus brevis (strain ATCC 367 / BCRC 12310 / CIP 105137 / JCM 1170 / LMG 11437 / NCIMB 947 / NCTC 947) (Lactobacillus brevis).